A 274-amino-acid polypeptide reads, in one-letter code: Methionine aminopeptidase B (274 aa).

His-102 is a binding site for substrate. Positions 120, 131, and 194 each coordinate a divalent metal cation. Residue His-201 participates in substrate binding. Glu-227 and Glu-258 together coordinate a divalent metal cation.

It belongs to the peptidase M24A family. Methionine aminopeptidase type 1 subfamily. In terms of assembly, monomer. Requires Co(2+) as cofactor. It depends on Zn(2+) as a cofactor. Mn(2+) serves as cofactor. Fe(2+) is required as a cofactor.

The enzyme catalyses Release of N-terminal amino acids, preferentially methionine, from peptides and arylamides.. In terms of biological role, removes the N-terminal methionine from nascent proteins. The N-terminal methionine is often cleaved when the second residue in the primary sequence is small and uncharged (Met-Ala-, Cys, Gly, Pro, Ser, Thr, or Val). Requires deformylation of the N(alpha)-formylated initiator methionine before it can be hydrolyzed. The polypeptide is Methionine aminopeptidase B (Synechocystis sp. (strain ATCC 27184 / PCC 6803 / Kazusa)).